The primary structure comprises 838 residues: Protein translocase subunit SecA (838 aa).

Residues glutamine 85, 103–107 (GEGKT), and aspartate 493 contribute to the ATP site. 4 residues coordinate Zn(2+): cysteine 823, cysteine 825, cysteine 834, and histidine 835.

It belongs to the SecA family. In terms of assembly, monomer and homodimer. Part of the essential Sec protein translocation apparatus which comprises SecA, SecYEG and auxiliary proteins SecDF. Other proteins may also be involved. The cofactor is Zn(2+).

Its subcellular location is the cell membrane. The protein resides in the cytoplasm. It carries out the reaction ATP + H2O + cellular proteinSide 1 = ADP + phosphate + cellular proteinSide 2.. Part of the Sec protein translocase complex. Interacts with the SecYEG preprotein conducting channel. Has a central role in coupling the hydrolysis of ATP to the transfer of proteins into and across the cell membrane, serving as an ATP-driven molecular motor driving the stepwise translocation of polypeptide chains across the membrane. The chain is Protein translocase subunit SecA from Streptococcus gordonii (strain Challis / ATCC 35105 / BCRC 15272 / CH1 / DL1 / V288).